We begin with the raw amino-acid sequence, 208 residues long: Sodium/potassium-transporting ATPase subunit beta-1-interacting protein 4 (208 aa).

4 consecutive transmembrane segments (helical) span residues 10–30, 35–55, 62–82, and 151–171; these read LILL…FDFL, APIL…FGTL, VIAY…LICF, and ALQI…TSVF.

Belongs to the NKAIN family. In terms of assembly, interacts with atp1b1 C-terminus.

It localises to the cell membrane. This chain is Sodium/potassium-transporting ATPase subunit beta-1-interacting protein 4 (nkain4), found in Xenopus tropicalis (Western clawed frog).